Reading from the N-terminus, the 661-residue chain is Lateral signaling target protein 2 (661 aa).

The interval 294–432 is disordered; the sequence is VPEDTSSTLT…SDDEITDDVQ (139 aa). The span at 297–310 shows a compositional bias: polar residues; it reads DTSSTLTMSDFRTN. Low complexity-rich tracts occupy residues 330 to 360 and 381 to 393; these read SDST…SPHS and TNSN…TESP. Residues 394–411 show a composition bias toward acidic residues; that stretch reads ETIEEPDNVDMEESSESE. The segment covering 412 to 422 has biased composition (basic and acidic residues); the sequence is VDTHIDETRNE. The FYVE-type zinc-finger motif lies at 566-626; it reads DEDCEQCTAC…VCNLCYVHRL (61 aa). Zn(2+) contacts are provided by Cys-572, Cys-575, Cys-588, Cys-591, Cys-596, Cys-599, Cys-618, and Cys-621. Polar residues predominate over residues 641-650; it reads NGATVPSVTE. The disordered stretch occupies residues 641 to 661; it reads NGATVPSVTEQQSAQTASASS. A compositionally biased stretch (low complexity) spans 651-661; the sequence is QQSAQTASASS.

The protein belongs to the lst-2 family. As to expression, expressed in vulval precursor cells (VPCs).

Negative regulator of epidermal growth factor receptor (EGFR) signaling. This is Lateral signaling target protein 2 (lst-2) from Caenorhabditis elegans.